Consider the following 267-residue polypeptide: uncharacterized protein (267 aa).

The chain crosses the membrane as a helical span at residues 30–52 (FMRIFLLFLFFVLFTFGVEGYVI).

The protein localises to the membrane. This is an uncharacterized protein from Aquifex aeolicus (strain VF5).